Consider the following 294-residue polypeptide: 4-hydroxybenzoate octaprenyltransferase (294 aa).

Helical transmembrane passes span 24 to 44 (IGIL…ADGF), 47 to 67 (LHLI…GCVI), 99 to 119 (LLAA…DPLV), 139 to 159 (FLAI…PMGF), 164 to 184 (GEVP…AVAY), 213 to 233 (VAAV…VGIA), 238 to 258 (PWFF…YTLI), and 274 to 294 (NWVG…FPAA).

Belongs to the UbiA prenyltransferase family. Mg(2+) is required as a cofactor.

The protein resides in the cell inner membrane. It catalyses the reaction all-trans-octaprenyl diphosphate + 4-hydroxybenzoate = 4-hydroxy-3-(all-trans-octaprenyl)benzoate + diphosphate. The protein operates within cofactor biosynthesis; ubiquinone biosynthesis. Its function is as follows. Catalyzes the prenylation of para-hydroxybenzoate (PHB) with an all-trans polyprenyl group. Mediates the second step in the final reaction sequence of ubiquinone-8 (UQ-8) biosynthesis, which is the condensation of the polyisoprenoid side chain with PHB, generating the first membrane-bound Q intermediate 3-octaprenyl-4-hydroxybenzoate. The protein is 4-hydroxybenzoate octaprenyltransferase of Aromatoleum aromaticum (strain DSM 19018 / LMG 30748 / EbN1) (Azoarcus sp. (strain EbN1)).